Reading from the N-terminus, the 1224-residue chain is Serine/threonine-protein kinase CST20 (1224 aa).

The segment covering 1–18 (MSILSENNPTPTSITDPN) has biased composition (polar residues). Disordered regions lie at residues 1 to 378 (MSIL…TAHN) and 403 to 464 (TNSS…HSQE). Low complexity-rich tracts occupy residues 57–70 (NTTS…SLGS) and 95–119 (DSGS…NPES). A compositionally biased stretch (basic and acidic residues) spans 144–155 (HQGDDSDNEKQY). Composition is skewed to polar residues over residues 169-191 (DSYS…NNVS), 201-218 (TSSL…NENA), and 231-240 (PTSKTSSFHD). Low complexity predominate over residues 242 to 251 (SSVISSSTSV). Polar residues-rich tracts occupy residues 256 to 271 (SNPT…SYKS) and 305 to 324 (DTLS…TLQG). 2 stretches are compositionally biased toward low complexity: residues 343 to 375 (NTSA…STST) and 433 to 462 (KVRG…NSHS). The region spanning 469-482 (ISTPFNAKHLAHVG) is the CRIB domain. Disordered regions lie at residues 539-825 (FHFD…ALAD) and 861-913 (LREK…KQAA). Over residues 544-555 (NKSSSSGWSNEN) the composition is skewed to polar residues. The segment covering 564-575 (SNSGSGSGGGGA) has biased composition (gly residues). Residues 598-607 (ITPSQSMPTK) are compositionally biased toward polar residues. Positions 608 to 622 (TESKQSENQHPHEDN) are enriched in basic and acidic residues. The segment covering 623 to 636 (ATQYTPRTPTSHVQ) has biased composition (polar residues). 3 stretches are compositionally biased toward low complexity: residues 664–677 (PSSQ…SQSD), 690–704 (SPSK…SKSL), and 730–743 (SIPK…SLSS). Positions 744–755 (QLRPATNGSTTA) are enriched in polar residues. The span at 783 to 801 (APPPPPSAPPAPPVPPAPP) shows a compositional bias: pro residues. A compositionally biased stretch (polar residues) spans 805-820 (LSEQTSEIPQQRTAPS). Residues 861–870 (LREKNERQNR) show a composition bias toward basic and acidic residues. Positions 871–886 (QQETGQNNADTASGGS) are enriched in polar residues. The 253-residue stretch at 947–1199 (YVDLVKIGQG…ADELLHDNFI (253 aa)) folds into the Protein kinase domain. ATP contacts are provided by residues 953–961 (IGQGASGGV) and Lys-977. Asp-1067 serves as the catalytic Proton acceptor.

The protein belongs to the protein kinase superfamily. STE Ser/Thr protein kinase family. STE20 subfamily.

The protein resides in the cytoplasm. It localises to the nucleus. The catalysed reaction is L-seryl-[protein] + ATP = O-phospho-L-seryl-[protein] + ADP + H(+). It carries out the reaction L-threonyl-[protein] + ATP = O-phospho-L-threonyl-[protein] + ADP + H(+). MAP4K component of the MAPK pathway required for the mating pheromone response, and the regulation of cell polarity and cell cycle. Phosphorylates histone H2B to form H2BS10ph. Required for hyphal formation and virulence. In Candida albicans (strain WO-1) (Yeast), this protein is Serine/threonine-protein kinase CST20 (CST20).